Here is an 88-residue protein sequence, read N- to C-terminus: Small ribosomal subunit protein bS20 (88 aa).

The protein belongs to the bacterial ribosomal protein bS20 family.

Its function is as follows. Binds directly to 16S ribosomal RNA. The protein is Small ribosomal subunit protein bS20 of Rhodospirillum rubrum (strain ATCC 11170 / ATH 1.1.1 / DSM 467 / LMG 4362 / NCIMB 8255 / S1).